Reading from the N-terminus, the 380-residue chain is SAM and SH3 domain-containing protein 3 (380 aa).

The tract at residues 1–76 (MLRRKPSNAS…KSGKKLGKKW (76 aa)) is disordered. Positions 22 to 41 (LQRSSSFKDFAKSKPSSPVV) are enriched in low complexity. Ser27, Ser34, and Ser42 each carry phosphoserine. Phosphothreonine is present on Thr61. A Phosphoserine modification is found at Ser97. Disordered regions lie at residues 98-174 (EEMA…TGPF), 237-256 (VGHA…KPKT), and 318-380 (TGSE…AGAP). Position 103 is a phosphothreonine (Thr103). Ser110 carries the post-translational modification Phosphoserine. A Phosphothreonine modification is found at Thr112. The residue at position 113 (Ser113) is a Phosphoserine. Tyr116 carries the phosphotyrosine modification. A Phosphoserine modification is found at Ser120. A compositionally biased stretch (polar residues) spans 143 to 152 (RQASTGSELC). Residues 153-164 (SPSPGSGSFGEE) show a composition bias toward low complexity. Residues 173-234 (PFCGRARVHT…KFIYVDVLPE (62 aa)) form the SH3 domain. A compositionally biased stretch (basic residues) spans 241–255 (RPSRRQSKGKRPKPK). Positions 252 to 316 (PKPKTLHELL…LTAAELLLDY (65 aa)) constitute an SAM domain. Thr318 bears the Phosphothreonine mark. Acidic residues predominate over residues 318–327 (TGSEEAEEGA). Ser320 is subject to Phosphoserine.

Functionally, may function as a signaling adapter protein in lymphocytes. The chain is SAM and SH3 domain-containing protein 3 (SASH3) from Homo sapiens (Human).